Reading from the N-terminus, the 395-residue chain is D-serine dehydratase (395 aa).

Residue K46 is modified to N6-(pyridoxal phosphate)lysine. Pyridoxal 5'-phosphate-binding residues include Y184, Y191, T232, G254, and N255. Positions 365 and 367 each coordinate Zn(2+).

Belongs to the DSD1 family. Pyridoxal 5'-phosphate serves as cofactor. Requires Zn(2+) as cofactor.

The catalysed reaction is D-serine = pyruvate + NH4(+). Its function is as follows. Catalyzes the conversion of D-serine to pyruvate and ammonia. Plays a role in D-serine detoxification. This chain is D-serine dehydratase, found in Dictyostelium discoideum (Social amoeba).